The chain runs to 276 residues: Bifunctional protein FolD (276 aa).

Residues asparagine 157 to serine 159, serine 182, and isoleucine 223 contribute to the NADP(+) site.

This sequence belongs to the tetrahydrofolate dehydrogenase/cyclohydrolase family. In terms of assembly, homodimer.

It carries out the reaction (6R)-5,10-methylene-5,6,7,8-tetrahydrofolate + NADP(+) = (6R)-5,10-methenyltetrahydrofolate + NADPH. It catalyses the reaction (6R)-5,10-methenyltetrahydrofolate + H2O = (6R)-10-formyltetrahydrofolate + H(+). Its pathway is one-carbon metabolism; tetrahydrofolate interconversion. Its function is as follows. Catalyzes the oxidation of 5,10-methylenetetrahydrofolate to 5,10-methenyltetrahydrofolate and then the hydrolysis of 5,10-methenyltetrahydrofolate to 10-formyltetrahydrofolate. The chain is Bifunctional protein FolD from Thermoplasma acidophilum (strain ATCC 25905 / DSM 1728 / JCM 9062 / NBRC 15155 / AMRC-C165).